A 424-amino-acid polypeptide reads, in one-letter code: Gamma-glutamyl phosphate reductase (424 aa).

This sequence belongs to the gamma-glutamyl phosphate reductase family.

It is found in the cytoplasm. The enzyme catalyses L-glutamate 5-semialdehyde + phosphate + NADP(+) = L-glutamyl 5-phosphate + NADPH + H(+). The protein operates within amino-acid biosynthesis; L-proline biosynthesis; L-glutamate 5-semialdehyde from L-glutamate: step 2/2. Its function is as follows. Catalyzes the NADPH-dependent reduction of L-glutamate 5-phosphate into L-glutamate 5-semialdehyde and phosphate. The product spontaneously undergoes cyclization to form 1-pyrroline-5-carboxylate. The protein is Gamma-glutamyl phosphate reductase of Shewanella woodyi (strain ATCC 51908 / MS32).